We begin with the raw amino-acid sequence, 136 residues long: Large ribosomal subunit protein bL17 (136 aa).

The protein belongs to the bacterial ribosomal protein bL17 family. As to quaternary structure, part of the 50S ribosomal subunit. Contacts protein L32.

The sequence is that of Large ribosomal subunit protein bL17 from Rickettsia africae (strain ESF-5).